Here is a 315-residue protein sequence, read N- to C-terminus: Homoserine kinase (315 aa).

97–107 (PPARGLGSSAT) contributes to the ATP binding site.

Belongs to the GHMP kinase family. Homoserine kinase subfamily.

The protein localises to the cytoplasm. It carries out the reaction L-homoserine + ATP = O-phospho-L-homoserine + ADP + H(+). Its pathway is amino-acid biosynthesis; L-threonine biosynthesis; L-threonine from L-aspartate: step 4/5. In terms of biological role, catalyzes the ATP-dependent phosphorylation of L-homoserine to L-homoserine phosphate. The chain is Homoserine kinase from Synechococcus sp. (strain CC9902).